The following is a 291-amino-acid chain: N-acetylmannosamine kinase (291 aa).

ATP-binding positions include 5-12 (AIDIGGTK) and 132-139 (GVGGGVVS). Residues H156, C166, C168, and C173 each contribute to the Zn(2+) site.

It belongs to the ROK (NagC/XylR) family. NanK subfamily. Homodimer.

The catalysed reaction is an N-acyl-D-mannosamine + ATP = an N-acyl-D-mannosamine 6-phosphate + ADP + H(+). The protein operates within amino-sugar metabolism; N-acetylneuraminate degradation; D-fructose 6-phosphate from N-acetylneuraminate: step 2/5. In terms of biological role, catalyzes the phosphorylation of N-acetylmannosamine (ManNAc) to ManNAc-6-P. The protein is N-acetylmannosamine kinase of Escherichia coli (strain K12 / MC4100 / BW2952).